We begin with the raw amino-acid sequence, 503 residues long: Cobyric acid synthase (503 aa).

The GATase cobBQ-type domain maps to 251-450; it reads DLDIAVIRLP…IHGIFENAAF (200 aa). The active-site Nucleophile is Cys-331. His-442 is an active-site residue.

This sequence belongs to the CobB/CobQ family. CobQ subfamily.

It functions in the pathway cofactor biosynthesis; adenosylcobalamin biosynthesis. Its function is as follows. Catalyzes amidations at positions B, D, E, and G on adenosylcobyrinic A,C-diamide. NH(2) groups are provided by glutamine, and one molecule of ATP is hydrogenolyzed for each amidation. In Dehalococcoides mccartyi (strain CBDB1), this protein is Cobyric acid synthase.